A 94-amino-acid polypeptide reads, in one-letter code: Putative regulatory protein THA_332 (94 aa).

The protein belongs to the RemA family.

The polypeptide is Putative regulatory protein THA_332 (Thermosipho africanus (strain TCF52B)).